The sequence spans 656 residues: Very long-chain specific acyl-CoA dehydrogenase, mitochondrial (656 aa).

A disordered region spans residues 1–33 (MQSARMTPSVGRQLLRLGARSSRSTTVLQGQPR). The transit peptide at 1–41 (MQSARMTPSVGRQLLRLGARSSRSTTVLQGQPRPISAQRLY) directs the protein to the mitochondrion. A catalytic region spans residues 42–483 (AREATQAVLD…ALQGCMDKGK (442 aa)). Lysine 52 bears the N6-acetyllysine mark. Residues lysine 72 and lysine 128 each carry the N6-acetyllysine; alternate modification. N6-succinyllysine; alternate is present on residues lysine 72 and lysine 128. Lysine 196 is modified (N6-succinyllysine). 215 to 224 (FCLTEPSSGS) contacts FAD. Cysteine 238 is modified (S-nitrosocysteine). Lysine 240 bears the N6-acetyllysine; alternate mark. Lysine 240 carries the N6-succinyllysine; alternate modification. Residue 250 to 252 (WIS) participates in FAD binding. Lysine 269 bears the N6-succinyllysine mark. Residues lysine 277 and lysine 279 each carry the N6-acetyllysine; alternate modification. N6-succinyllysine; alternate is present on residues lysine 277 and lysine 279. Lysine 299 and lysine 317 each carry N6-acetyllysine. An N6-acetyllysine; alternate modification is found at lysine 332. Lysine 332 bears the N6-succinyllysine; alternate mark. Lysine 373 bears the N6-succinyllysine mark. A substrate-binding site is contributed by 462–464 (FEG). Glutamate 463 functions as the Proton acceptor in the catalytic mechanism. An FAD-binding site is contributed by 465–467 (AND). Lysine 483 is subject to N6-acetyllysine; alternate. The residue at position 483 (lysine 483) is an N6-succinyllysine; alternate. Residues 484–517 (ELTGLGNALKNPFGNVGLLMGEAGKQLRRRTGIG) form a membrane-anchoring region. Residues serine 518 and serine 523 each carry the phosphoserine modification. Lysine 551 carries the post-translational modification N6-acetyllysine. Lysine 557 is modified (N6-acetyllysine; alternate). Residue lysine 557 is modified to N6-succinyllysine; alternate. Glutamine 563 lines the FAD pocket. Residue lysine 640 is modified to N6-succinyllysine.

This sequence belongs to the acyl-CoA dehydrogenase family. In terms of assembly, homodimer. Homodimerizes after import into the mitochondrion. FAD is required as a cofactor. In terms of processing, S-nitrosylation at Cys-238 in liver improves catalytic efficiency.

The protein localises to the mitochondrion inner membrane. It catalyses the reaction a very-long-chain 2,3-saturated fatty acyl-CoA + oxidized [electron-transfer flavoprotein] + H(+) = a very-long-chain (2E)-enoyl-CoA + reduced [electron-transfer flavoprotein]. The enzyme catalyses dodecanoyl-CoA + oxidized [electron-transfer flavoprotein] + H(+) = (2E)-dodecenoyl-CoA + reduced [electron-transfer flavoprotein]. It carries out the reaction tetradecanoyl-CoA + oxidized [electron-transfer flavoprotein] + H(+) = (2E)-tetradecenoyl-CoA + reduced [electron-transfer flavoprotein]. The catalysed reaction is oxidized [electron-transfer flavoprotein] + hexadecanoyl-CoA + H(+) = (2E)-hexadecenoyl-CoA + reduced [electron-transfer flavoprotein]. It catalyses the reaction octadecanoyl-CoA + oxidized [electron-transfer flavoprotein] + H(+) = (2E)-octadecenoyl-CoA + reduced [electron-transfer flavoprotein]. The enzyme catalyses eicosanoyl-CoA + oxidized [electron-transfer flavoprotein] + H(+) = (2E)-eicosenoyl-CoA + reduced [electron-transfer flavoprotein]. It carries out the reaction docosanoyl-CoA + oxidized [electron-transfer flavoprotein] + H(+) = (2E)-docosenoyl-CoA + reduced [electron-transfer flavoprotein]. The catalysed reaction is tetracosanoyl-CoA + oxidized [electron-transfer flavoprotein] + H(+) = (2E)-tetracosenoyl-CoA + reduced [electron-transfer flavoprotein]. Its pathway is lipid metabolism; mitochondrial fatty acid beta-oxidation. In terms of biological role, very long-chain specific acyl-CoA dehydrogenase is one of the acyl-CoA dehydrogenases that catalyze the first step of mitochondrial fatty acid beta-oxidation, an aerobic process breaking down fatty acids into acetyl-CoA and allowing the production of energy from fats. The first step of fatty acid beta-oxidation consists in the removal of one hydrogen from C-2 and C-3 of the straight-chain fatty acyl-CoA thioester, resulting in the formation of trans-2-enoyl-CoA. Among the different mitochondrial acyl-CoA dehydrogenases, very long-chain specific acyl-CoA dehydrogenase acts specifically on acyl-CoAs with saturated 12 to 24 carbons long primary chains. The protein is Very long-chain specific acyl-CoA dehydrogenase, mitochondrial of Mus musculus (Mouse).